The primary structure comprises 741 residues: Protein O-mannosyl-transferase TMTC4 (741 aa).

The Cytoplasmic portion of the chain corresponds to 1–10 (MVELDADLDH). The chain crosses the membrane as a helical span at residues 11-31 (IVPSVLPPFWAKLVVGFVSLL). Residues 32 to 110 (CFARSYDGDF…FHPVGFHVVN (79 aa)) are Extracellular-facing. N-linked (GlcNAc...) asparagine glycosylation occurs at Asn-77. The helical transmembrane segment at 111–131 (ILLHGSISILMLDVFSVLFGG) threads the bilayer. The Cytoplasmic segment spans residues 132–146 (LQYTGKGQRVHLAPR). 2 consecutive transmembrane segments (helical) span residues 147–166 (ASLL…ECVA) and 167–185 (GVVG…LSFL). At 186–198 (GYCQAFKETGNKE) the chain is on the cytoplasmic side. A helical membrane pass occupies residues 199–219 (GTHSSTFWVLLSIFLGAVAML). The Extracellular segment spans residues 220-224 (CKEQG). A helical transmembrane segment spans residues 225-245 (ITVLGLNAVFDILVIGKLDIL). Topologically, residues 246–265 (AAVRKVLHKDKSQENAGMFK) are cytoplasmic. Residues 266-286 (NGGLLFRIALLTIGGTSMLYI) form a helical membrane-spanning segment. Over 287–354 (RWKIMGTGPP…PLIKSVGDWR (68 aa)) the chain is Extracellular. The chain crosses the membrane as a helical span at residues 355 to 375 (VIALAALWLCLIGLIFQALCS). Residues 376-382 (EDSCKRR) are Cytoplasmic-facing. Residues 383–403 (ILTLGLGFLVIPFLPASNLFF) traverse the membrane as a helical segment. The Extracellular portion of the chain corresponds to 404–412 (RVGFVVAER). Residues 413-433 (VLYLPSAGYCVLLTFGFGALS) form a helical membrane-spanning segment. Residues 434–441 (RHTKKKKP) are Cytoplasmic-facing. The chain crosses the membrane as a helical span at residues 442 to 462 (VAAIILGILLINALRCVIRSG). Residues 463 to 741 (EWRSEEQLFR…KLEQTQKKDV (279 aa)) are Extracellular-facing. 7 TPR repeats span residues 482–515 (AKVH…NPKY), 516–549 (VHAM…QPDF), 550–583 (AAAW…RRKY), 584–617 (PDCY…KPEH), 618–651 (SLAW…IPND), 652–685 (HSLM…NPNV), and 686–719 (ASYH…DPVA). Asn-497 is a glycosylation site (N-linked (GlcNAc...) asparagine). Asn-609 carries an N-linked (GlcNAc...) asparagine glycan. Asn-725 carries an N-linked (GlcNAc...) asparagine glycan.

It belongs to the TMTC family.

The protein resides in the membrane. Its subcellular location is the endoplasmic reticulum. It carries out the reaction a di-trans,poly-cis-dolichyl beta-D-mannosyl phosphate + L-seryl-[protein] = 3-O-(alpha-D-mannosyl)-L-seryl-[protein] + a di-trans,poly-cis-dolichyl phosphate + H(+). The enzyme catalyses a di-trans,poly-cis-dolichyl beta-D-mannosyl phosphate + L-threonyl-[protein] = 3-O-(alpha-D-mannosyl)-L-threonyl-[protein] + a di-trans,poly-cis-dolichyl phosphate + H(+). The protein operates within protein modification; protein glycosylation. In terms of biological role, transfers mannosyl residues to the hydroxyl group of serine or threonine residues. The 4 members of the TMTC family are O-mannosyl-transferases dedicated primarily to the cadherin superfamily, each member seems to have a distinct role in decorating the cadherin domains with O-linked mannose glycans at specific regions. Also acts as O-mannosyl-transferase on other proteins such as PDIA3. In Mus musculus (Mouse), this protein is Protein O-mannosyl-transferase TMTC4.